The primary structure comprises 332 residues: Probable sugar phosphate/phosphate translocator At1g53660 (332 aa).

The next 10 membrane-spanning stretches (helical) occupy residues 19–39, 46–66, 82–102, 120–140, 143–163, 165–185, 199–219, 233–253, 259–281, and 285–304; these read ASILLYITLSSGQIFFNKWVL, FPYPLGLTLLHMTFSSVLCFL, LEIYVTSVIPIGAMFAMTLWL, AIMPVAVFILGVCVGLEIMSC, LLIMSVISFGVLVSSYGELNI, WVGVVYQMGGIVSEALRLILM, LSLMYYMSPCSAICLFIPWIF, LVLSLNSLCTFALNLSVFLVI, LTIRIAGVVKDWLVVLVSALLFA, and LTIINLFGYAVAIVGVATYN. Polar residues predominate over residues 312–322; that stretch reads ESITLVSQSPK. The tract at residues 312 to 332 is disordered; that stretch reads ESITLVSQSPKNSDKKPDGPL. The segment covering 323–332 has biased composition (basic and acidic residues); that stretch reads NSDKKPDGPL.

Belongs to the TPT transporter family. TPT (TC 2.A.7.9) subfamily.

The protein resides in the membrane. This chain is Probable sugar phosphate/phosphate translocator At1g53660, found in Arabidopsis thaliana (Mouse-ear cress).